We begin with the raw amino-acid sequence, 20 residues long: Unknown protein from 2D-PAGE of needles (20 aa).

The polypeptide is Unknown protein from 2D-PAGE of needles (Pinus pinaster (Maritime pine)).